Here is a 412-residue protein sequence, read N- to C-terminus: Odorant receptor 47b (412 aa).

Residues 1 to 74 are Cytoplasmic-facing; it reads MNDSGYQSNL…NLFIMCNVMT (74 aa). A helical transmembrane segment spans residues 75–95; it reads IFWTMFVALPESKNVIEMGDD. The Extracellular segment spans residues 96-103; that stretch reads LVWISGMA. The chain crosses the membrane as a helical span at residues 104–124; sequence LVFTKIFYMHLRCDEIDELIS. The Cytoplasmic portion of the chain corresponds to 125–169; sequence DFEYYNRELRPHNIDEEVLGWQRLCYVIESGLYINCFCLVNFFSA. Residues 170-190 traverse the membrane as a helical segment; it reads AIFLQPLLGEGKLPFHSVYPF. The Extracellular segment spans residues 191–229; the sequence is QWHRLDLHPYTFWFLYIWQSLTSQHNLMSILMVDMVGIS. A helical membrane pass occupies residues 230–250; it reads TFLQTALNLKLLCIEIRKLGD. Topologically, residues 251 to 302 are cytoplasmic; that stretch reads MEVSDKRFHEEFCRVVRFHQHIIKLVGKANRAFNGAFNAQLMASFSLISIST. The chain crosses the membrane as a helical span at residues 303–323; it reads FETMAAAAVDPKMAAKFVLLM. Residues 324–330 lie on the Extracellular side of the membrane; it reads LVAFIQL. A helical transmembrane segment spans residues 331 to 351; it reads SLWCVSGTLVYTQSVEVAQAA. Residues 352–389 lie on the Cytoplasmic side of the membrane; sequence FDINDWHTKSPGIQRDISFVILRAQKPLMYVAEPFLPF. The chain crosses the membrane as a helical span at residues 390–410; it reads TLGTYMLVLKNCYRLLALMQE. Over 411-412 the chain is Extracellular; the sequence is SM.

This sequence belongs to the insect chemoreceptor superfamily. Heteromeric odorant receptor channel (TC 1.A.69) family. Or49a subfamily. In terms of assembly, interacts with Orco. Complexes exist early in the endomembrane system in olfactory sensory neurons (OSNs), coupling these complexes to the conserved ciliary trafficking pathway. Expressed in olfactory sensory neurons in the antenna.

It is found in the cell membrane. In terms of biological role, odorant receptor which mediates acceptance or avoidance behavior, depending on its substrates. The odorant receptor repertoire encodes a large collection of odor stimuli that vary widely in identity, intensity, and duration. May form a complex with Orco to form odorant-sensing units, providing sensitive and prolonged odorant signaling and calcium permeability. Plays an important role in sociosexual interactions since its enhances courtship in a pheromone-dependent manner. The chain is Odorant receptor 47b (Or47b) from Drosophila melanogaster (Fruit fly).